Consider the following 342-residue polypeptide: L-threonine 3-dehydrogenase (342 aa).

Position 38 (Cys-38) interacts with Zn(2+). Active-site charge relay system residues include Thr-40 and His-43. Zn(2+)-binding residues include His-63, Glu-64, Cys-93, Cys-96, Cys-99, and Cys-107. NAD(+) contacts are provided by residues Ile-175, Asp-195, Arg-200, 262–264 (LGI), and 286–287 (IY).

Belongs to the zinc-containing alcohol dehydrogenase family. As to quaternary structure, homotetramer. Requires Zn(2+) as cofactor.

Its subcellular location is the cytoplasm. The enzyme catalyses L-threonine + NAD(+) = (2S)-2-amino-3-oxobutanoate + NADH + H(+). It participates in amino-acid degradation; L-threonine degradation via oxydo-reductase pathway; glycine from L-threonine: step 1/2. Its function is as follows. Catalyzes the NAD(+)-dependent oxidation of L-threonine to 2-amino-3-ketobutyrate. The sequence is that of L-threonine 3-dehydrogenase from Burkholderia cenocepacia (strain ATCC BAA-245 / DSM 16553 / LMG 16656 / NCTC 13227 / J2315 / CF5610) (Burkholderia cepacia (strain J2315)).